The sequence spans 260 residues: Eukaryotic translation initiation factor 3 subunit G-2 (260 aa).

Positions 180–258 constitute an RRM domain; sequence CAVRISNLSE…LILSVEWSKP (79 aa).

It belongs to the eIF-3 subunit G family. As to quaternary structure, component of the eukaryotic translation initiation factor 3 (eIF-3) complex. The eIF-3 complex interacts with pix.

It is found in the cytoplasm. Its function is as follows. RNA-binding component of the eukaryotic translation initiation factor 3 (eIF-3) complex, which is involved in protein synthesis of a specialized repertoire of mRNAs and, together with other initiation factors, stimulates binding of mRNA and methionyl-tRNAi to the 40S ribosome. The eIF-3 complex specifically targets and initiates translation of a subset of mRNAs involved in cell proliferation. This subunit can bind 18S rRNA. In Drosophila grimshawi (Hawaiian fruit fly), this protein is Eukaryotic translation initiation factor 3 subunit G-2.